A 188-amino-acid chain; its full sequence is Peptidyl-prolyl cis-trans isomerase (188 aa).

Residues Met1–Ala20 form the signal peptide. The PPIase cyclophilin-type domain maps to Asn21–Ile181.

The protein belongs to the cyclophilin-type PPIase family.

The protein localises to the periplasm. It carries out the reaction [protein]-peptidylproline (omega=180) = [protein]-peptidylproline (omega=0). PPIases accelerate the folding of proteins. It catalyzes the cis-trans isomerization of proline imidic peptide bonds in oligopeptides. This protein is not essential for growth. Presumably plays a role in signal transduction. This is Peptidyl-prolyl cis-trans isomerase (rotA) from Acinetobacter baylyi (strain ATCC 33305 / BD413 / ADP1).